We begin with the raw amino-acid sequence, 334 residues long: Mediator of RNA polymerase II transcription subunit 4 (334 aa).

The stretch at 76-100 forms a coiled coil; that stretch reads LIRTLKAHVEKRDEVIQQVENNLKA. A compositionally biased stretch (low complexity) spans 188–203; that stretch reads SSAQKPIIASPSASSS. 2 disordered regions span residues 188–234 and 252–334; these read SSAQ…GYGA and EKQW…GRNK. 2 stretches are compositionally biased toward polar residues: residues 204–225 and 264–282; these read NGGTAPTRTVGTPLVNSATNGD and ATSSQSPLSGAPQSPSSPS.

The protein belongs to the Mediator complex subunit 4 family. In terms of assembly, component of the Mediator complex.

It is found in the nucleus. Functionally, component of the Mediator complex, a coactivator involved in the regulated transcription of nearly all RNA polymerase II-dependent genes. Mediator functions as a bridge to convey information from gene-specific regulatory proteins to the basal RNA polymerase II transcription machinery. Mediator is recruited to promoters by direct interactions with regulatory proteins and serves as a scaffold for the assembly of a functional preinitiation complex with RNA polymerase II and the general transcription factors. This Caenorhabditis briggsae protein is Mediator of RNA polymerase II transcription subunit 4 (mdt-4).